The following is a 146-amino-acid chain: Protein SprT-like (146 aa).

Positions 6-141 (YVKTVSIEDF…GCGLCQGKLI (136 aa)) constitute a SprT-like domain. A Zn(2+)-binding site is contributed by H64. Residue E65 is part of the active site. H68 serves as a coordination point for Zn(2+).

It belongs to the SprT family. Zn(2+) is required as a cofactor.

It localises to the cytoplasm. This chain is Protein SprT-like, found in Streptococcus thermophilus (strain CNRZ 1066).